A 212-amino-acid chain; its full sequence is Cyclin-P4-1 (212 aa).

The protein belongs to the cyclin family. Cyclin U/P subfamily.

The chain is Cyclin-P4-1 (CYCP4-1) from Oryza sativa subsp. japonica (Rice).